A 436-amino-acid chain; its full sequence is Gamma-glutamyl phosphate reductase (436 aa).

This sequence belongs to the gamma-glutamyl phosphate reductase family.

The protein resides in the cytoplasm. The catalysed reaction is L-glutamate 5-semialdehyde + phosphate + NADP(+) = L-glutamyl 5-phosphate + NADPH + H(+). It participates in amino-acid biosynthesis; L-proline biosynthesis; L-glutamate 5-semialdehyde from L-glutamate: step 2/2. Functionally, catalyzes the NADPH-dependent reduction of L-glutamate 5-phosphate into L-glutamate 5-semialdehyde and phosphate. The product spontaneously undergoes cyclization to form 1-pyrroline-5-carboxylate. The chain is Gamma-glutamyl phosphate reductase from Prochlorococcus marinus (strain AS9601).